The sequence spans 123 residues: Potassium voltage-gated channel subfamily E member 2 (123 aa).

N-linked (GlcNAc...) asparagine glycosylation is found at Asn6 and Asn29. The chain crosses the membrane as a helical span at residues 49-69 (VILYLMVMIGMFAFIVVAILV). The Cytoplasmic portion of the chain corresponds to 70 to 123 (STVKSKRREHSQDPYHQYIVEDWQQKYRSQILHLEDSKATIHENLGATGFTVSP).

It belongs to the potassium channel KCNE family. As to quaternary structure, interacts with KCNB1. Associates with KCNH2/ERG1. May associate with KCNQ2 and KCNQ3. Associates with HCN1 and probably HCN2. Heteromultimer with KCNC2. Interacts with KCNC2. Interacts with KCNQ1; forms a heterooligomer complex that targets to the membrane raft and leading to currents with an apparently instantaneous activation, a rapid deactivation process and a linear current-voltage relationship and decreases the amplitude of the outward current.

The protein localises to the cell membrane. Its subcellular location is the apical cell membrane. Functionally, ancillary protein that functions as a regulatory subunit of the voltage-gated potassium (Kv) channel complex composed of pore-forming and potassium-conducting alpha subunits and of regulatory beta subunits. KCNE2 beta subunit modulates the gating kinetics and enhances stability of the channel complex. Alters the gating of the delayed rectifier Kv channel containing KCNB1 alpha subunit. Associates with KCNH2/HERG alpha subunit Kv channel to form the rapidly activating component of the delayed rectifying potassium current (IKr) in heart. May associate with KCNQ2 and/or KCNQ3 alpha subunits to modulate the native M-type current. May associate with HCN1 and HCN2 channel subunits to increase potassium current. Forms a heterooligomer complex with KCNQ1/KVLQT1 alpha subunits which leads to currents with an apparently instantaneous activation, a rapid deactivation process and a linear current-voltage relationship and decreases the amplitude of the outward current. KCNQ1-KCNE2 channel associates with Na(+)-coupled myo-inositol symporter in the apical membrane of choroid plexus epithelium and regulates the myo-inositol gradient between blood and cerebrospinal fluid with an impact on neuron excitability. The protein is Potassium voltage-gated channel subfamily E member 2 (Kcne2) of Cavia porcellus (Guinea pig).